Consider the following 46-residue polypeptide: DNA-directed RNA polymerases I, II, and III subunit rpabc4 (46 aa).

Residues cysteine 7, cysteine 10, cysteine 24, and cysteine 27 each coordinate Zn(2+). The C4-type zinc-finger motif lies at 7 to 27; that stretch reads CGECGAEHEIKPKEPVKCKDC.

Belongs to the archaeal Rpo12/eukaryotic RPC10 RNA polymerase subunit family. Component of the RNA polymerase I (Pol I), RNA polymerase II (Pol II) and RNA polymerase III (Pol III) complexes consisting of at least 13, 12 and 17 subunits, respectively.

It localises to the nucleus. Its function is as follows. DNA-dependent RNA polymerase catalyzes the transcription of DNA into RNA using the four ribonucleoside triphosphates as substrates. Common component of RNA polymerases I, II and III which synthesize ribosomal RNA precursors, mRNA precursors and many functional non-coding RNAs, and a small RNAs, such as 5S rRNA and tRNAs, respectively. The chain is DNA-directed RNA polymerases I, II, and III subunit rpabc4 (polr2k) from Dictyostelium discoideum (Social amoeba).